The primary structure comprises 167 residues: Pathogenesis-related protein PR-1 type (167 aa).

Residues 1 to 29 (MAHNHWCNLFSVALVCVVALVMVQYSVAQ) form the signal peptide. The 120-residue stretch at 36–155 (VDAHNAARSA…NGAWFITCNY (120 aa)) folds into the SCP domain. 3 cysteine pairs are disulfide-bonded: cysteine 72-cysteine 144, cysteine 117-cysteine 123, and cysteine 139-cysteine 153.

The protein belongs to the CRISP family.

Functionally, probably involved in the defense reaction of plants against pathogens. The protein is Pathogenesis-related protein PR-1 type of Sambucus nigra (European elder).